A 151-amino-acid polypeptide reads, in one-letter code: Large ribosomal subunit protein bL9 (151 aa).

Belongs to the bacterial ribosomal protein bL9 family.

Functionally, binds to the 23S rRNA. The protein is Large ribosomal subunit protein bL9 of Rhodococcus opacus (strain B4).